A 134-amino-acid chain; its full sequence is DNA-directed RNA polymerase subunit omega (134 aa).

The interval 76-102 (EVDEPEPDPASMIAAGGAAAADSEEQD) is disordered.

Belongs to the RNA polymerase subunit omega family. The RNAP catalytic core consists of 2 alpha, 1 beta, 1 beta' and 1 omega subunit. When a sigma factor is associated with the core the holoenzyme is formed, which can initiate transcription.

It catalyses the reaction RNA(n) + a ribonucleoside 5'-triphosphate = RNA(n+1) + diphosphate. Functionally, promotes RNA polymerase assembly. Latches the N- and C-terminal regions of the beta' subunit thereby facilitating its interaction with the beta and alpha subunits. The polypeptide is DNA-directed RNA polymerase subunit omega (Rhizobium etli (strain ATCC 51251 / DSM 11541 / JCM 21823 / NBRC 15573 / CFN 42)).